The chain runs to 162 residues: RNA pyrophosphohydrolase (162 aa).

The region spanning Lys-7 to Glu-149 is the Nudix hydrolase domain. The Nudix box motif lies at Gly-40–Gly-61.

The protein belongs to the Nudix hydrolase family. RppH subfamily. The cofactor is a divalent metal cation.

In terms of biological role, accelerates the degradation of transcripts by removing pyrophosphate from the 5'-end of triphosphorylated RNA, leading to a more labile monophosphorylated state that can stimulate subsequent ribonuclease cleavage. This chain is RNA pyrophosphohydrolase, found in Wolbachia pipientis wMel.